The sequence spans 808 residues: Phospholipase D alpha 1 (808 aa).

Residues 1-125 (MAKTLLHGTL…LEGEEVDKWV (125 aa)) form the C2 domain. Aspartate 186 provides a ligand contact to Ca(2+). The PLD phosphodiesterase 1 domain occupies 326 to 364 (TIFTHHQKIVVVDSEMPTSGSENRRVVSFVGGIDLCDGR). Catalysis depends on residues histidine 331, lysine 333, and aspartate 338. Histidine 331 lines the a 1,2-diacyl-sn-glycero-3-phosphate pocket. Ca(2+) is bound by residues histidine 370 and histidine 404. Residues 654-681 (FMIYVHAKMMIVDDEYIIIGSANINQRS) form the PLD phosphodiesterase 2 domain. Catalysis depends on residues histidine 659, lysine 661, and aspartate 666. Histidine 659 is a binding site for a 1,2-diacyl-sn-glycero-3-phosphate. Glutamate 720 lines the Ca(2+) pocket.

The protein belongs to the phospholipase D family. C2-PLD subfamily. It depends on Ca(2+) as a cofactor.

The catalysed reaction is a 1,2-diacyl-sn-glycero-3-phosphocholine + H2O = a 1,2-diacyl-sn-glycero-3-phosphate + choline + H(+). In terms of biological role, hydrolyzes glycerol-phospholipids at the terminal phosphodiesteric bond. Plays an important role in various cellular processes. The polypeptide is Phospholipase D alpha 1 (PLD1) (Spuriopimpinella brachycarpa (Chamnamul)).